The primary structure comprises 149 residues: MRYNEKELLSLSRQRAEKAAELSMRGPKKGSVLKKRLVKLVVNFLFYFRIDEEEPIGALLLEHCRVSKEDEKGFSIHFIDEPEKKYMFECSSQEQCVEWVEALTNASYEFMRRSLMFYRNEILKMTGKDPLEQYGISGESRFQLENASL.

The region spanning Arg-15 to Tyr-108 is the PH domain.

This is Pleckstrin homology domain-containing family J member 1 (plekhj1) from Xenopus tropicalis (Western clawed frog).